A 349-amino-acid chain; its full sequence is Protein pelota homolog (349 aa).

The protein belongs to the eukaryotic release factor 1 family. Pelota subfamily. Monomer. Requires a divalent metal cation as cofactor.

Its subcellular location is the cytoplasm. Functionally, may function in recognizing stalled ribosomes, interact with stem-loop structures in stalled mRNA molecules, and effect endonucleolytic cleavage of the mRNA. May play a role in the release non-functional ribosomes and degradation of damaged mRNAs. Has endoribonuclease activity. This chain is Protein pelota homolog, found in Nitrosopumilus maritimus (strain SCM1).